Consider the following 250-residue polypeptide: Phosphoribosylaminoimidazole-succinocarboxamide synthase (250 aa).

This sequence belongs to the SAICAR synthetase family.

It catalyses the reaction 5-amino-1-(5-phospho-D-ribosyl)imidazole-4-carboxylate + L-aspartate + ATP = (2S)-2-[5-amino-1-(5-phospho-beta-D-ribosyl)imidazole-4-carboxamido]succinate + ADP + phosphate + 2 H(+). Its pathway is purine metabolism; IMP biosynthesis via de novo pathway; 5-amino-1-(5-phospho-D-ribosyl)imidazole-4-carboxamide from 5-amino-1-(5-phospho-D-ribosyl)imidazole-4-carboxylate: step 1/2. The sequence is that of Phosphoribosylaminoimidazole-succinocarboxamide synthase from Chloroflexus aggregans (strain MD-66 / DSM 9485).